Here is a 317-residue protein sequence, read N- to C-terminus: 2,3-dihydroxyphenylpropionate/2,3-dihydroxicinnamic acid 1,2-dioxygenase (317 aa).

Histidine 115 serves as the catalytic Proton donor. Residue histidine 179 is the Proton acceptor of the active site.

It belongs to the LigB/MhpB extradiol dioxygenase family. Homotetramer. Requires Fe(2+) as cofactor.

It catalyses the reaction 3-(2,3-dihydroxyphenyl)propanoate + O2 = (2Z,4E)-2-hydroxy-6-oxonona-2,4-dienedioate + H(+). The enzyme catalyses (2E)-3-(2,3-dihydroxyphenyl)prop-2-enoate + O2 = (2Z,4E,7E)-2-hydroxy-6-oxonona-2,4,7-trienedioate + H(+). It participates in aromatic compound metabolism; 3-phenylpropanoate degradation. In terms of biological role, catalyzes the non-heme iron(II)-dependent oxidative cleavage of 2,3-dihydroxyphenylpropionic acid and 2,3-dihydroxicinnamic acid into 2-hydroxy-6-ketononadienedioate and 2-hydroxy-6-ketononatrienedioate, respectively. In Photorhabdus laumondii subsp. laumondii (strain DSM 15139 / CIP 105565 / TT01) (Photorhabdus luminescens subsp. laumondii), this protein is 2,3-dihydroxyphenylpropionate/2,3-dihydroxicinnamic acid 1,2-dioxygenase.